The chain runs to 123 residues: WAP four-disulfide core domain protein 5 (123 aa).

An N-terminal signal peptide occupies residues 1–24 (MRFGRLLLLAVLLAGVSQLPAVSG). 2 consecutive WAP domains span residues 27 to 74 (KGEK…IPRV) and 75 to 121 (SVKL…RDPV). Cystine bridges form between Cys34–Cys62, Cys41–Cys66, Cys49–Cys61, Cys55–Cys70, Cys81–Cys109, Cys88–Cys113, Cys96–Cys108, and Cys102–Cys117.

Its subcellular location is the secreted. In terms of biological role, putative acid-stable proteinase inhibitor. This Otolemur garnettii (Small-eared galago) protein is WAP four-disulfide core domain protein 5 (WFDC5).